A 272-amino-acid polypeptide reads, in one-letter code: Zinc transporter ZupT (272 aa).

8 consecutive transmembrane segments (helical) span residues Ile-11–Val-31, Leu-40–Ile-60, Leu-76–Asp-96, Leu-126–Ala-146, Ala-158–Phe-178, Ala-189–Phe-209, Val-211–Leu-231, and Val-250–Ala-270. Fe(2+)-binding residues include Asn-136 and Glu-139. The Zn(2+) site is built by Glu-139 and His-164. Residues Asn-165, Glu-168, and Glu-197 each contribute to the Fe(2+) site. Residue Glu-168 participates in Zn(2+) binding.

The protein belongs to the ZIP transporter (TC 2.A.5) family. ZupT subfamily.

The protein resides in the cell inner membrane. It catalyses the reaction Zn(2+)(in) = Zn(2+)(out). Mediates zinc uptake. May also transport other divalent cations. The sequence is that of Zinc transporter ZupT from Xanthomonas axonopodis pv. citri (strain 306).